The following is a 493-amino-acid chain: Cobyric acid synthase (493 aa).

Residues 246–440 form the GATase cobBQ-type domain; it reads PIDIAVIKMP…IHGVFDGVSF (195 aa). Cys326 (nucleophile) is an active-site residue. His432 is a catalytic residue.

The protein belongs to the CobB/CobQ family. CobQ subfamily.

Its pathway is cofactor biosynthesis; adenosylcobalamin biosynthesis. In terms of biological role, catalyzes amidations at positions B, D, E, and G on adenosylcobyrinic A,C-diamide. NH(2) groups are provided by glutamine, and one molecule of ATP is hydrogenolyzed for each amidation. The protein is Cobyric acid synthase of Clostridium botulinum (strain Langeland / NCTC 10281 / Type F).